The chain runs to 141 residues: Large ribosomal subunit protein uL16 (141 aa).

Over residues 1-19 (MLMPKKTKYRKQQKGRNRG) the composition is skewed to basic residues. Residues 1 to 22 (MLMPKKTKYRKQQKGRNRGKAY) are disordered.

It belongs to the universal ribosomal protein uL16 family. In terms of assembly, part of the 50S ribosomal subunit.

Binds 23S rRNA and is also seen to make contacts with the A and possibly P site tRNAs. In Nitratiruptor sp. (strain SB155-2), this protein is Large ribosomal subunit protein uL16.